Consider the following 325-residue polypeptide: Apoptosis-enhancing nuclease (325 aa).

The short motif at 27 to 35 (RKRHKRRSR) is the Nucleolar localization signal element. Residues 53–105 (LSMPPEPGSSPLPTPFGAVTATEDASSGKQCPRAGSGGAPCSRRPAPGKASGP) form a disordered region. Pro residues predominate over residues 56–66 (PPEPGSSPLPT). The 157-residue stretch at 110 to 266 (CVAIDCEMVG…EDATTAMELY (157 aa)) folds into the Exonuclease domain. The short motif at 165–188 (RQHMCKAIPFQVAQKEILKLLKGK) is the Nuclear localization signal element. Positions 281–325 (LWTCPEDREPDSSTDMEQYMEDQYWPDDLAHGSRGGAREAQDRRN) are disordered. Basic and acidic residues predominate over residues 308–325 (DLAHGSRGGAREAQDRRN).

The protein resides in the nucleus. Its subcellular location is the nucleolus. Its function is as follows. Exonuclease with activity against single- and double-stranded DNA and RNA. Mediates p53-induced apoptosis. When induced by p53 following DNA damage, digests double-stranded DNA to form single-stranded DNA and amplifies DNA damage signals, leading to enhancement of apoptosis. The protein is Apoptosis-enhancing nuclease (AEN) of Pongo abelii (Sumatran orangutan).